A 156-amino-acid polypeptide reads, in one-letter code: Small ribosomal subunit protein uS7 (156 aa).

The protein belongs to the universal ribosomal protein uS7 family. Part of the 30S ribosomal subunit. Contacts proteins S9 and S11.

Functionally, one of the primary rRNA binding proteins, it binds directly to 16S rRNA where it nucleates assembly of the head domain of the 30S subunit. Is located at the subunit interface close to the decoding center, probably blocks exit of the E-site tRNA. The protein is Small ribosomal subunit protein uS7 of Levilactobacillus brevis (strain ATCC 367 / BCRC 12310 / CIP 105137 / JCM 1170 / LMG 11437 / NCIMB 947 / NCTC 947) (Lactobacillus brevis).